The sequence spans 318 residues: Potassium channel subfamily K member 15 (318 aa).

The Cytoplasmic portion of the chain corresponds to 1–8 (MRKQSART). A helical transmembrane segment spans residues 9 to 29 (AALILCILSYLLVGAAVFDAL). An intramembrane region (pore-forming) is located at residues 80-101 (FAGSFYFAITVITTIGYGHAAP). The helical transmembrane segment at 108-128 (VFCMFYALLGIPLTLVTFQSL) threads the bilayer. The Cytoplasmic segment spans residues 129-158 (GERLNALVRCLLLAAKRCLGLRRPHVSAEN). A helical transmembrane segment spans residues 159-179 (MVVAGLLLCAATLALGAAAFA). Positions 189-209 (AYYYCFITLTTIGFGDFVALQ) form an intramembrane region, pore-forming. Residues 223–243 (FSFLYILLGLTVIGAFLNLVV) traverse the membrane as a helical segment. The Cytoplasmic portion of the chain corresponds to 244 to 318 (LRFLASAEAP…DRLRARRKSI (75 aa)). The segment at 296–318 (LSPEAVHDCHSSPDRLRARRKSI) is disordered. The span at 300–311 (AVHDCHSSPDRL) shows a compositional bias: basic and acidic residues.

This sequence belongs to the two pore domain potassium channel (TC 1.A.1.8) family. As to quaternary structure, heterodimer. Post-translationally, phosphorylated. In terms of tissue distribution, brain-specific. Highly expressed in auditory nuclei, in Purkinje cells and in olfactory bulb mitral cells.

The protein resides in the membrane. Its function is as follows. Probable potassium channel subunit. No channel activity observed in heterologous systems. May need to associate with another protein to form a functional channel. The sequence is that of Potassium channel subfamily K member 15 (Kcnk15) from Rattus norvegicus (Rat).